The sequence spans 444 residues: Tol-Pal system protein TolB (444 aa).

Positions 1–19 are cleaved as a signal peptide; that stretch reads MRNIIYFILSLLFSFASYA.

It belongs to the TolB family. The Tol-Pal system is composed of five core proteins: the inner membrane proteins TolA, TolQ and TolR, the periplasmic protein TolB and the outer membrane protein Pal. They form a network linking the inner and outer membranes and the peptidoglycan layer.

The protein localises to the periplasm. In terms of biological role, part of the Tol-Pal system, which plays a role in outer membrane invagination during cell division and is important for maintaining outer membrane integrity. The sequence is that of Tol-Pal system protein TolB from Rickettsia massiliae (strain Mtu5).